The following is a 407-amino-acid chain: Guanine nucleotide-binding protein alpha-1 subunit (407 aa).

Gly2 carries the N-myristoyl glycine lipid modification. The S-palmitoyl cysteine moiety is linked to residue Cys3. The G-alpha domain maps to 73-407 (NDIKVLLLGA…MSNNLQSLMF (335 aa)). The G1 motif stretch occupies residues 76–89 (KVLLLGAGDSGKTT). Residues Asp84, Ser85, Gly86, Lys87, Thr88, Thr89, Asp190, Leu215, Thr221, Gly243, Asn309, Lys310, Asp312, and Ala380 each coordinate GTP. Thr88 contacts Mg(2+). Residues 213–221 (DILHCRIKT) are G2 motif. A Mg(2+)-binding site is contributed by Thr221. Residues 236–245 (YRFFDVGGQR) are G3 motif. The interval 305-312 (ILFLNKLD) is G4 motif. Residues 378–383 (TTATDT) form a G5 motif region.

The protein belongs to the G-alpha family. G(q) subfamily. In terms of assembly, g proteins are composed of 3 units; alpha, beta and gamma. The alpha chain contains the guanine nucleotide binding site. Requires Mg(2+) as cofactor.

Its function is as follows. Implicated in the mating and sporulation pathway. Probably coupled to mating-factor receptors. May act in concert with Ras1. The protein is Guanine nucleotide-binding protein alpha-1 subunit (gpa1) of Schizosaccharomyces pombe (strain 972 / ATCC 24843) (Fission yeast).